The following is a 691-amino-acid chain: MARAFPLERVRNIGIAAHIDAGKTTTTERILFYSGVVHKIGEVHDGAAVTDWMAQERERGITITAAAISTSWKDHRVNIIDTPGHVDFTIEVERSMRVLDGVIAVFCAVGGVQPQSETVWRQADRYSVPRMVFVNKMDRTGADFLKVHGQIQDRLKANAVPIQLPIGAEGELSGIIDLVENKAHIYKDDLGQDIEITDVPEAMKDQVEEWRAFLMEKVAETDEALIEKFLDTGELSNDELKQGIRTGVVKHGLVPVLCGSAFKNKGVQLVLDAVVDYLPAPIDVPPIQGILPDGTEAVRPSDDKAPFSALAFKVMADPYGKLTFVRMYSGVLEKGSYVMNSTKGIKERISRLVVLKADDREEVDQLQAGDLGAVLGLKNTTTGDTLCSADEPIVLETLFVPEPVISVAVEPKTKGDMEKLSKALVSLAEEDPTFRVRTDQETGQTVIAGMGELHLEILVDRMMREFKVEANIGAPQVSYRETIRGSSKGEGKFSRQTGGKGQYGHVVIEMEPGEPESGFVFVNKIVGGIVPKEFIKPSEQGMKETCESGVIAGFPLIDVKVSMVDGSYHDVDSSEMAFKIAGSMAFKDAVRKCNPVLLEPMMKVEVEVPEDFLGSVIGDLSSRRGQVEGQAIDDGTSKVSAKVPLAEMFGYATELRSMTQGRGIFSMEFSHYEDVPRNVAEAIISKNQGNS.

The tr-type G domain maps to 8 to 282 (ERVRNIGIAA…AVVDYLPAPI (275 aa)). Residues 17–24 (AHIDAGKT), 81–85 (DTPGH), and 135–138 (NKMD) each bind GTP.

Belongs to the TRAFAC class translation factor GTPase superfamily. Classic translation factor GTPase family. EF-G/EF-2 subfamily.

Its subcellular location is the cytoplasm. Functionally, catalyzes the GTP-dependent ribosomal translocation step during translation elongation. During this step, the ribosome changes from the pre-translocational (PRE) to the post-translocational (POST) state as the newly formed A-site-bound peptidyl-tRNA and P-site-bound deacylated tRNA move to the P and E sites, respectively. Catalyzes the coordinated movement of the two tRNA molecules, the mRNA and conformational changes in the ribosome. This Synechococcus sp. (strain CC9902) protein is Elongation factor G.